The sequence spans 457 residues: MLRAEWVEKRKRFKNKTQMHLARQGIITEEMEYVAKREGLHPEFVRQEVARGRMIIPANINHLHLEPMCIGINSKVKVNANIGNSGLASDIPTEVEKAKVAIKYGADTIMDLSTGEAIKETREAIINVSTVPVGTVPIYEAWKIAKGNVKELTVDLILDVIEEQARQGVSYMTIHAGILREHLPLVQHRVMGIVSRGGAILAQWMAEHGKQNPLYEHFDKICEIFKKYDVSFSLGDALRPGCIEDATDDAQLAELKVLGELVEKAWKHDVQAMVEGPGHVPLHQVEFNMKIQQEWCHEAPFYVLGPLVLDVAPGYDHIGSAIGGALAGWAGAAMLCYITPKEHLGLPNVEDVKQGVIAYKIAAHAADIAKHWPGARDWDLAMSIARYNFDWNKQFELAMDPETARAYHDETLPQEGYKTAKFCSMCGPEFCSYKISQKVQEKVSPEELIENGNWVAP.

Substrate contacts are provided by residues Asn-81, Met-110, Tyr-139, His-175, 195 to 197 (SRG), 236 to 239 (DALR), and Glu-275. His-279 serves as a coordination point for Zn(2+). Tyr-302 is a substrate binding site. His-343 is a Zn(2+) binding site. The [4Fe-4S] cluster site is built by Cys-423, Cys-426, and Cys-431.

Belongs to the ThiC family. It depends on [4Fe-4S] cluster as a cofactor.

It carries out the reaction 5-amino-1-(5-phospho-beta-D-ribosyl)imidazole + S-adenosyl-L-methionine = 4-amino-2-methyl-5-(phosphooxymethyl)pyrimidine + CO + 5'-deoxyadenosine + formate + L-methionine + 3 H(+). The protein operates within cofactor biosynthesis; thiamine diphosphate biosynthesis. In terms of biological role, catalyzes the synthesis of the hydroxymethylpyrimidine phosphate (HMP-P) moiety of thiamine from aminoimidazole ribotide (AIR) in a radical S-adenosyl-L-methionine (SAM)-dependent reaction. This is Phosphomethylpyrimidine synthase from Aquifex aeolicus (strain VF5).